We begin with the raw amino-acid sequence, 308 residues long: HTH-type transcriptional activator AllS (308 aa).

An HTH lysR-type domain is found at 2–59 (FDPETLRTFISVAETGSFSKAAERLCKTTATTSYRIKLLEENTGVGLFFRTTRSVSLT). A DNA-binding region (H-T-H motif) is located at residues 19-38 (FSKAAERLCKTTATTSYRIK).

Belongs to the LysR transcriptional regulatory family.

Positive regulator essential for the expression of allD operon. Binds to the allD promoter. The sequence is that of HTH-type transcriptional activator AllS (allS) from Salmonella typhi.